Reading from the N-terminus, the 131-residue chain is Fumarate reductase subunit C (131 aa).

3 helical membrane-spanning segments follow: residues 30 to 50 (EGTAVPAVWFSIELIFGLFAL), 63 to 83 (FLQNPVIVIINLITLAAALLH), and 109 to 129 (IIKSLWAVTVVATIVILFVAL).

The protein belongs to the FrdC family. As to quaternary structure, part of an enzyme complex containing four subunits: a flavoprotein (FrdA), an iron-sulfur protein (FrdB), and two hydrophobic anchor proteins (FrdC and FrdD).

The protein resides in the cell inner membrane. Its function is as follows. Two distinct, membrane-bound, FAD-containing enzymes are responsible for the catalysis of fumarate and succinate interconversion; fumarate reductase is used in anaerobic growth, and succinate dehydrogenase is used in aerobic growth. Anchors the catalytic components of the fumarate reductase complex to the cell inner membrane, binds quinones. The polypeptide is Fumarate reductase subunit C (Escherichia coli O17:K52:H18 (strain UMN026 / ExPEC)).